Here is a 454-residue protein sequence, read N- to C-terminus: Venom prothrombin activator porpharin-D (454 aa).

Positions Met1 to Ala20 are cleaved as a signal peptide. A propeptide spanning residues Glu21–Arg40 is cleaved from the precursor. A Gla domain is found at Ser41–Asp86. Glu46, Glu47, Glu54, Glu56, Glu59, Glu60, Glu65, Glu66, Glu69, and Glu75 each carry 4-carboxyglutamate. A disulfide bridge connects residues Cys57 and Cys62. One can recognise an EGF-like 1; calcium-binding domain in the interval Asp86–Glu122. Disulfide bonds link Cys90/Cys101, Cys95/Cys110, Cys112/Cys121, Cys129/Cys140, Cys136/Cys149, Cys151/Cys164, Cys172/Cys316, Cys216/Cys221, Cys236/Cys252, Cys364/Cys378, and Cys389/Cys417. An O-linked (Hex...) serine glycan is attached at Ser92. Positions Cys129 to Cys164 constitute an EGF-like 2 domain. Residues Arg182–Arg209 constitute a propeptide, activation peptide. Residues Ile210–Arg441 form the Peptidase S1 domain. Residues His251 and Asp296 each act as charge relay system in the active site. Ser393 (charge relay system) is an active-site residue.

The protein belongs to the peptidase S1 family. Snake venom subfamily. Heterodimer of a light chain and a heavy chain; disulfide-linked. Post-translationally, the vitamin K-dependent, enzymatic carboxylation of some glutamate residues allows the modified protein to bind calcium. In terms of tissue distribution, expressed by the venom gland.

It is found in the secreted. The catalysed reaction is Selective cleavage of Arg-|-Thr and then Arg-|-Ile bonds in prothrombin to form thrombin.. Its function is as follows. Snake prothrombin activator that attacks the hemostatic system of prey. This protein is functionally similar to blood coagulation factor Xa. The sequence is that of Venom prothrombin activator porpharin-D from Pseudechis porphyriacus (Red-bellied black snake).